The primary structure comprises 91 residues: Small ribosomal subunit protein uS19 (91 aa).

Belongs to the universal ribosomal protein uS19 family.

Its function is as follows. Protein S19 forms a complex with S13 that binds strongly to the 16S ribosomal RNA. The chain is Small ribosomal subunit protein uS19 from Prochlorococcus marinus (strain SARG / CCMP1375 / SS120).